Consider the following 189-residue polypeptide: Glycerol-3-phosphate acyltransferase (189 aa).

A run of 5 helical transmembrane segments spans residues 1 to 21 (MFWL…AIVL), 50 to 70 (KLAI…VLLA), 77 to 97 (LHAQ…PLYF), 111 to 131 (MLMA…LLTF), and 151 to 171 (LLAW…VMIV).

Belongs to the PlsY family. As to quaternary structure, probably interacts with PlsX.

It is found in the cell inner membrane. It catalyses the reaction an acyl phosphate + sn-glycerol 3-phosphate = a 1-acyl-sn-glycero-3-phosphate + phosphate. It functions in the pathway lipid metabolism; phospholipid metabolism. Catalyzes the transfer of an acyl group from acyl-phosphate (acyl-PO(4)) to glycerol-3-phosphate (G3P) to form lysophosphatidic acid (LPA). This enzyme utilizes acyl-phosphate as fatty acyl donor, but not acyl-CoA or acyl-ACP. In Pseudomonas putida (strain ATCC 47054 / DSM 6125 / CFBP 8728 / NCIMB 11950 / KT2440), this protein is Glycerol-3-phosphate acyltransferase.